A 550-amino-acid chain; its full sequence is MSSDITGTAAWQKLRDHHAQIQSVHLRELFEKDPARGQELTVSAGDLFIDYSKHRVDRDTIGLLLELARSVDLEARRDAMFAGEHINTSEDRAVLHTALRLPADASLVVDGQDVVADVHEVLDRMGDFTDRVRSGEWRGATGERIKTVVNIGIGGSDLGPVMVYRALRHYADAGISVRFISNVDPADLVRSLSGLDPATTLFIVASKTFSTLETLTNATAARRWLLGGLGLGNEAVAKHFVAVSTHADRVAEFGIDTANMFGFWDWVGGRYSVDSAIGLSVMAAIGKERFAEFLAGFHAVDEHFRTAPLEENAPVLLGLIGLWYSNFFGAESRAVLPYSNDLVRFPAYLQQLTMESNGKSVRADGSPVPASTGEIFWGEPGTNGQHAFYQLLHQGTRLVPSDFIGFGEPTDDLPTADGTGSMHDLLMSNFFAQTKVLAFGKTAEEIAAEGTPEDLVPHKVMPGNRPSTTILAPKLTPSVIGQLIALYEHQVFVEGVVWGIDSFDQWGVELGKTQAVELQPVLTAAEEPAAQSDSSTDSLVRWYRRQRGRA.

Glu355 acts as the Proton donor in catalysis. Active-site residues include His386 and Lys512.

This sequence belongs to the GPI family.

It localises to the cytoplasm. It catalyses the reaction alpha-D-glucose 6-phosphate = beta-D-fructose 6-phosphate. The protein operates within carbohydrate biosynthesis; gluconeogenesis. It functions in the pathway carbohydrate degradation; glycolysis; D-glyceraldehyde 3-phosphate and glycerone phosphate from D-glucose: step 2/4. In terms of biological role, catalyzes the reversible isomerization of glucose-6-phosphate to fructose-6-phosphate. The protein is Glucose-6-phosphate isomerase of Rhodococcus opacus (strain B4).